The chain runs to 395 residues: Guanine nucleotide-binding protein subunit beta-5 (395 aa).

WD repeat units lie at residues 103–142 (GHGNKVLCMDWCKDKRRIVSSSQDGKVIVWDSFTTNKEHA), 145–184 (MPCTWVMACAYAPSGCAIACGGLDNKCSVYPLTFDKNENM), 193–234 (MHTN…QSFH), 236–278 (HGAD…QAFE), 279–318 (THESDINSVRYYPSGDAFASGSDDATCRLYDLRADREVAI), 320–362 (SKES…RVSI), and 365–394 (GHENRVSTLRVSPDGTAFCSGSWDHTLRVW).

The protein belongs to the WD repeat G protein beta family. In terms of assembly, component of a complex composed of RGS9 (isoform RGS9-1), GNB5 and RGS9BP; within this complex, the presence of GNB5 stabilizes both itself and RGS9 and increases RGS9 GTPase-activating protein (GAP) activity. Interacts with RGS7, forming the RGS7-GNB5 complex; within this complex, the presence of GNB5 increases RGS7 GTPase-activating protein (GAP) activity. Interacts with GPR158; promotes the GTPase activator activity of the RGS7-GNB5 complex in absence of glycine, in contrast GTPase activator activity of the RGS7-GNB5 complex is inhibited in presence of glycine. Interacts with RGS6. In terms of tissue distribution, widely expressed.

It is found in the membrane. Functionally, enhances GTPase-activating protein (GAP) activity of regulator of G protein signaling (RGS) proteins, such as RGS7 and RGS9, hence involved in the termination of the signaling initiated by the G protein coupled receptors (GPCRs) by accelerating the GTP hydrolysis on the G-alpha subunits, thereby promoting their inactivation. Increases RGS7 GTPase-activating protein (GAP) activity, thereby regulating mood and cognition. Increases RGS9 GTPase-activating protein (GAP) activity, hence contributes to the deactivation of G protein signaling initiated by D(2) dopamine receptors. May play an important role in neuronal signaling, including in the parasympathetic, but not sympathetic, control of heart rate. The sequence is that of Guanine nucleotide-binding protein subunit beta-5 (GNB5) from Homo sapiens (Human).